The sequence spans 278 residues: uncharacterized protein (278 aa).

The region spanning 1 to 55 (MKIRERFSMVDLPVLIITAAIIGHDKYKAFHAGANDILQKPYHYSEFMARIQNLI) is the Response regulatory domain.

This is an uncharacterized protein from Bacillus subtilis (strain 168).